The chain runs to 305 residues: Catechol 1,2-dioxygenase (305 aa).

Fe cation-binding residues include Tyr163, Tyr197, His221, and His223.

It belongs to the intradiol ring-cleavage dioxygenase family. In terms of assembly, homodimer. Requires Fe(3+) as cofactor.

The enzyme catalyses catechol + O2 = cis,cis-muconate + 2 H(+). It participates in aromatic compound metabolism; beta-ketoadipate pathway; 5-oxo-4,5-dihydro-2-furylacetate from catechol: step 1/3. The sequence is that of Catechol 1,2-dioxygenase (catA) from Acinetobacter guillouiae (Acinetobacter genomosp. 11).